A 544-amino-acid polypeptide reads, in one-letter code: Chaperonin GroEL (544 aa).

Residues threonine 30–proline 33, lysine 51, aspartate 87–threonine 91, glycine 415, aspartate 480–alanine 482, and aspartate 496 contribute to the ATP site.

It belongs to the chaperonin (HSP60) family. As to quaternary structure, forms a cylinder of 14 subunits composed of two heptameric rings stacked back-to-back. Interacts with the co-chaperonin GroES.

The protein localises to the cytoplasm. It catalyses the reaction ATP + H2O + a folded polypeptide = ADP + phosphate + an unfolded polypeptide.. Its function is as follows. Together with its co-chaperonin GroES, plays an essential role in assisting protein folding. The GroEL-GroES system forms a nano-cage that allows encapsulation of the non-native substrate proteins and provides a physical environment optimized to promote and accelerate protein folding. The polypeptide is Chaperonin GroEL (Sulfurihydrogenibium sp. (strain YO3AOP1)).